Here is a 609-residue protein sequence, read N- to C-terminus: Serine/threonine-protein phosphatase 4 regulatory subunit 2 (609 aa).

Residue Ser-68 is modified to Phosphoserine. The interval 175 to 569 is disordered; the sequence is NNNGNADEGS…EEARVSPSAT (395 aa). A compositionally biased stretch (low complexity) spans 183–194; it reads GSSPGAGSAGCA. Over residues 201 to 225 the composition is skewed to basic and acidic residues; that stretch reads RSDDNDQPKAKKAKLEIDGEERSEA. Residues Ser-223 and Ser-226 each carry the phosphoserine modification. Residues 233–244 are compositionally biased toward basic and acidic residues; the sequence is VATRVKNEKDEK. Ser-252 is subject to Phosphoserine. Residues 258 to 270 are compositionally biased toward acidic residues; that stretch reads EIEEPDEEVDEAD. 2 stretches are compositionally biased toward basic and acidic residues: residues 310 to 351 and 375 to 400; these read IEAE…KPDG and EPVK…KQDD. Acidic residues predominate over residues 401–410; the sequence is IDSTETDDAP. The span at 414–462 shows a compositional bias: basic and acidic residues; it reads KPAEEKIASSESKPKTKSEDDPEAETKKSQPEKTETEAAEKSVSDEKQA. Thr-602 bears the Phosphothreonine mark. The residue at position 603 (Ser-603) is a Phosphoserine.

Belongs to the PPP4R2 family. In terms of assembly, serine/threonine-protein phosphatase 4 (PP4) occurs in different assemblies of the catalytic and one or more regulatory subunits. Probably part of a PP4 PPP4C-PPP4R2-PPP4R3 complex containing Pp4-19C, PPP4R2r and flfl.

In terms of biological role, regulatory subunit of serine/threonine-protein phosphatase 4 (PP4). The probable PP4 complex Pp4-19C-PPP4R2r-flfl (PPP4C-PPP4R2-PPP4R3) is required to prevent caspase induced cell death (in vitro). The sequence is that of Serine/threonine-protein phosphatase 4 regulatory subunit 2 (PPP4R2r) from Drosophila melanogaster (Fruit fly).